Reading from the N-terminus, the 329-residue chain is Malate dehydrogenase (329 aa).

12 to 18 (GAAGQIG) contacts NAD(+). The substrate site is built by R93 and R99. NAD(+) is bound by residues N106, Q113, and 130–132 (VGN). Substrate-binding residues include N132 and R163. H188 serves as the catalytic Proton acceptor.

The protein belongs to the LDH/MDH superfamily. MDH type 2 family.

The catalysed reaction is (S)-malate + NAD(+) = oxaloacetate + NADH + H(+). With respect to regulation, strongly inhibited by Hg(2+) and Zn(2+). Activated by Na(+), NH(4)(+), Ca(2+), Cu(2+) and Mg(2+). Its function is as follows. Catalyzes the reversible oxidation of malate to oxaloacetate. Exhibits remarkably higher catalytic efficiency for oxaloacetate reduction than for malate oxidation in vitro. Highly specific for NAD(H). Can also use NADPH for oxaloacetate reduction, but catalytic efficiency is 97-fold higher with NADH. No activity detected with NADP(+) and malate. This is Malate dehydrogenase from Streptomyces avermitilis (strain ATCC 31267 / DSM 46492 / JCM 5070 / NBRC 14893 / NCIMB 12804 / NRRL 8165 / MA-4680).